Consider the following 488-residue polypeptide: uncharacterized protein (488 aa).

27 to 38 serves as a coordination point for NAD(+); that stretch reads IVHFGFGAFHRA.

This sequence belongs to the mannitol dehydrogenase family. UxuB subfamily.

This is an uncharacterized protein from Escherichia coli (strain K12).